The primary structure comprises 461 residues: Cysteine--tRNA ligase (461 aa).

Residue Cys28 coordinates Zn(2+). Positions 30–40 (ITVYDLCHIGH) match the 'HIGH' region motif. Cys209, His234, and Glu238 together coordinate Zn(2+). The short motif at 266-270 (KMSKS) is the 'KMSKS' region element. Lys269 is an ATP binding site.

This sequence belongs to the class-I aminoacyl-tRNA synthetase family. As to quaternary structure, monomer. It depends on Zn(2+) as a cofactor.

The protein localises to the cytoplasm. It catalyses the reaction tRNA(Cys) + L-cysteine + ATP = L-cysteinyl-tRNA(Cys) + AMP + diphosphate. The chain is Cysteine--tRNA ligase from Escherichia coli (strain K12 / MC4100 / BW2952).